The primary structure comprises 131 residues: Small ribosomal subunit protein uS9 (131 aa).

The interval 102–131 (AGFLTRDPRMKERRKYGLKKARKAPQFSKR) is disordered. A compositionally biased stretch (basic residues) spans 112-131 (KERRKYGLKKARKAPQFSKR).

It belongs to the universal ribosomal protein uS9 family.

The chain is Small ribosomal subunit protein uS9 from Desulfitobacterium hafniense (strain DSM 10664 / DCB-2).